The sequence spans 187 residues: Peptidyl-tRNA hydrolase (187 aa).

A tRNA-binding site is contributed by histidine 14. The Proton acceptor role is filled by histidine 19. TRNA is bound by residues tyrosine 62, asparagine 64, and asparagine 110.

The protein belongs to the PTH family. In terms of assembly, monomer.

The protein localises to the cytoplasm. The catalysed reaction is an N-acyl-L-alpha-aminoacyl-tRNA + H2O = an N-acyl-L-amino acid + a tRNA + H(+). Its function is as follows. Hydrolyzes ribosome-free peptidyl-tRNAs (with 1 or more amino acids incorporated), which drop off the ribosome during protein synthesis, or as a result of ribosome stalling. Functionally, catalyzes the release of premature peptidyl moieties from peptidyl-tRNA molecules trapped in stalled 50S ribosomal subunits, and thus maintains levels of free tRNAs and 50S ribosomes. The polypeptide is Peptidyl-tRNA hydrolase (Chlorobaculum tepidum (strain ATCC 49652 / DSM 12025 / NBRC 103806 / TLS) (Chlorobium tepidum)).